We begin with the raw amino-acid sequence, 288 residues long: Pantothenate synthetase (288 aa).

30–37 contacts ATP; sequence MGALHEGH. His-37 functions as the Proton donor in the catalytic mechanism. Position 61 (Gln-61) interacts with (R)-pantoate. Gln-61 lines the beta-alanine pocket. 147–150 lines the ATP pocket; sequence GEKD. Gln-153 is a (R)-pantoate binding site. ATP is bound by residues Val-176 and 184 to 187; that span reads ISSR.

The protein belongs to the pantothenate synthetase family. In terms of assembly, homodimer.

The protein localises to the cytoplasm. The catalysed reaction is (R)-pantoate + beta-alanine + ATP = (R)-pantothenate + AMP + diphosphate + H(+). It functions in the pathway cofactor biosynthesis; (R)-pantothenate biosynthesis; (R)-pantothenate from (R)-pantoate and beta-alanine: step 1/1. Functionally, catalyzes the condensation of pantoate with beta-alanine in an ATP-dependent reaction via a pantoyl-adenylate intermediate. The polypeptide is Pantothenate synthetase (Chlorobium phaeobacteroides (strain BS1)).